The following is a 448-amino-acid chain: Tubulin beta chain (448 aa).

Residues Gln-11, Glu-69, Ser-138, Gly-142, Thr-143, Gly-144, Asn-204, and Asn-226 each contribute to the GTP site. Glu-69 lines the Mg(2+) pocket. Residues 425-448 (YQDASISEGEEEYLEEEEPLEHEE) form a disordered region. Residues 432 to 448 (EGEEEYLEEEEPLEHEE) are compositionally biased toward acidic residues.

It belongs to the tubulin family. As to quaternary structure, dimer of alpha and beta chains. A typical microtubule is a hollow water-filled tube with an outer diameter of 25 nm and an inner diameter of 15 nM. Alpha-beta heterodimers associate head-to-tail to form protofilaments running lengthwise along the microtubule wall with the beta-tubulin subunit facing the microtubule plus end conferring a structural polarity. Microtubules usually have 13 protofilaments but different protofilament numbers can be found in some organisms and specialized cells. Requires Mg(2+) as cofactor.

The protein localises to the cytoplasm. Its subcellular location is the cytoskeleton. In terms of biological role, tubulin is the major constituent of microtubules, a cylinder consisting of laterally associated linear protofilaments composed of alpha- and beta-tubulin heterodimers. Microtubules grow by the addition of GTP-tubulin dimers to the microtubule end, where a stabilizing cap forms. Below the cap, tubulin dimers are in GDP-bound state, owing to GTPase activity of alpha-tubulin. This is Tubulin beta chain (benR) from Aspergillus parasiticus.